The chain runs to 149 residues: Arginine repressor (149 aa).

Belongs to the ArgR family.

It is found in the cytoplasm. The protein operates within amino-acid biosynthesis; L-arginine biosynthesis [regulation]. Functionally, regulates arginine biosynthesis genes. The chain is Arginine repressor from Geobacillus kaustophilus (strain HTA426).